The sequence spans 366 residues: Isocitrate dehydrogenase [NAD] subunit alpha, mitochondrial (366 aa).

A mitochondrion-targeting transit peptide spans 1–27; it reads MAGPAWISKVSRLLGAFHNQKQVTRGF. Lysine 77 carries the post-translational modification N6-succinyllysine. Residue threonine 101 is modified to Phosphothreonine. Positions 115, 125, and 146 each coordinate substrate. An N6-acetyllysine modification is found at lysine 223. The Mg(2+) site is built by aspartate 233, aspartate 257, and aspartate 261. Position 343 is an N6-acetyllysine; alternate (lysine 343). Residue lysine 343 is modified to N6-succinyllysine; alternate. Lysine 350 bears the N6-succinyllysine mark.

Belongs to the isocitrate and isopropylmalate dehydrogenases family. Heterooligomer of subunits alpha (IDH3A), beta (IDH3B), and gamma (IDH3G) in the apparent ratio of 2:1:1. The heterodimer containing one IDH3A and one IDH3B subunit and the heterodimer containing one IDH3A and one IDH3G subunit assemble into a heterotetramer (which contains two subunits of IDH3A, one of IDH3B and one of IDH3G) and further into the heterooctamer. Mg(2+) is required as a cofactor. It depends on Mn(2+) as a cofactor.

The protein resides in the mitochondrion. It carries out the reaction D-threo-isocitrate + NAD(+) = 2-oxoglutarate + CO2 + NADH. Its activity is regulated as follows. The heterotetramer and the heterodimer composed of IDH3A and IDH3G subunits can be allosterically activated by citrate (CIT) or/and ADP, and the two activators can act independently or synergistically. The heterodimer composed of IDH3A and IDH3B subunits cannot be allosterically regulated and the allosteric regulation of the heterotetramer is through the IDH3G subunit and not the IDH3B subunit. The IDH3G subunit contains the allosteric site which consists of a CIT-binding site and an ADP-binding site, and the binding of CIT and ADP causes conformational changes at the allosteric site which are transmitted to the active site in the catalytic subunit (IDH3A) through a cascade of conformational changes at the heterodimer interface, leading to stabilization of the isocitrate-binding at the active site and thus activation of the enzyme. ATP can activate the heterotetramer and the heterodimer composed of IDH3A and IDH3G subunits at low concentrations but inhibits their activities at high concentrations, whereas ATP exhibits only inhibitory effect on the heterodimer composed of IDH3A and IDH3B subunits. Catalytic subunit of the enzyme which catalyzes the decarboxylation of isocitrate (ICT) into alpha-ketoglutarate. The heterodimer composed of the alpha (IDH3A) and beta (IDH3B) subunits and the heterodimer composed of the alpha (IDH3A) and gamma (IDH3G) subunits, have considerable basal activity but the full activity of the heterotetramer (containing two subunits of IDH3A, one of IDH3B and one of IDH3G) requires the assembly and cooperative function of both heterodimers. In Bos taurus (Bovine), this protein is Isocitrate dehydrogenase [NAD] subunit alpha, mitochondrial.